The chain runs to 962 residues: Activity-dependent neuroprotective protein 2a (962 aa).

The C2H2-type 1 zinc-finger motif lies at 75-98 (LCCSLCWYSSRSVPTFRSHIHRCH). The C2H2-type 2; degenerate zinc finger occupies 108 to 130 (LMCPYCPFVSSPKVTEQHIQFFH). The segment at 165–188 (YTCATCGYHDSLLYVMKKHVLVNH) adopts a C2H2-type 3; degenerate zinc-finger fold. The C2H2-type 4 zinc-finger motif lies at 219–244 (YHCKLCKLPAETIEHLLYHILSSEKH). The C2H2-type 5; degenerate zinc finger occupies 527-547 (VKCLRCKILLTEQGIFQHLLH). 2 C2H2-type zinc fingers span residues 549 to 572 (LKCL…KKEH) and 650 to 673 (NACP…QTKH). Residues 688 to 712 (YKCIYCFGVYTEKSTPKTISIHVQR) form a C2H2-type 8; degenerate zinc finger. Residues 753 to 781 (QGAPEFPKPKKEAVTPRNRRRNTKASKTG) are disordered. Residues 795–854 (PMGMERTSFEDRKDFLSQYFHRKPYVTKTEIELLASRLWINKADVKAHFNSKLTKCLKAI) constitute a DNA-binding region (homeobox).

It is found in the nucleus. Its function is as follows. May be involved in transcriptional regulation. Required for progression through late erythroid differentiation. May be involved in vasculogenesis. The polypeptide is Activity-dependent neuroprotective protein 2a (Danio rerio (Zebrafish)).